Consider the following 90-residue polypeptide: Probable Fe(2+)-trafficking protein (90 aa).

This sequence belongs to the Fe(2+)-trafficking protein family. In terms of assembly, monomer.

Could be a mediator in iron transactions between iron acquisition and iron-requiring processes, such as synthesis and/or repair of Fe-S clusters in biosynthetic enzymes. This chain is Probable Fe(2+)-trafficking protein, found in Pectobacterium carotovorum subsp. carotovorum (strain PC1).